Here is a 366-residue protein sequence, read N- to C-terminus: tRNA/tmRNA (uracil-C(5))-methyltransferase (366 aa).

Residues Gln-190, Tyr-218, Asn-223, Glu-239, and Asp-299 each contribute to the S-adenosyl-L-methionine site. Cys-324 functions as the Nucleophile in the catalytic mechanism. Glu-358 serves as the catalytic Proton acceptor.

Belongs to the class I-like SAM-binding methyltransferase superfamily. RNA M5U methyltransferase family. TrmA subfamily.

The enzyme catalyses uridine(54) in tRNA + S-adenosyl-L-methionine = 5-methyluridine(54) in tRNA + S-adenosyl-L-homocysteine + H(+). It catalyses the reaction uridine(341) in tmRNA + S-adenosyl-L-methionine = 5-methyluridine(341) in tmRNA + S-adenosyl-L-homocysteine + H(+). In terms of biological role, dual-specificity methyltransferase that catalyzes the formation of 5-methyluridine at position 54 (m5U54) in all tRNAs, and that of position 341 (m5U341) in tmRNA (transfer-mRNA). This chain is tRNA/tmRNA (uracil-C(5))-methyltransferase, found in Salmonella paratyphi C (strain RKS4594).